The primary structure comprises 283 residues: Plasma membrane ascorbate-dependent reductase CYBRD1 (283 aa).

The Cytoplasmic segment spans residues 1–5 (MEGYK). A helical membrane pass occupies residues 6–30 (SFLVFLVSSLLLGFLGVIFTLVWVL). In terms of domain architecture, Cytochrome b561 spans 13–218 (SSLLLGFLGV…FGGLVVWMVT (206 aa)). The Extracellular segment spans residues 31–45 (HWREGLGWDGGAAEF). A helical transmembrane segment spans residues 46 to 67 (NWHPVLVTSGFIFIQGIAIIVY). Residues His48, Arg68, and Lys77 each coordinate heme b. Residues 68–76 (RLPWTWNCS) are Cytoplasmic-facing. The L-ascorbate site is built by Lys77 and Lys81. The chain crosses the membrane as a helical span at residues 77–103 (KLLMKFIHAGLHLTAFVFTIVALVAVF). Residue His84 coordinates heme b. The Extracellular segment spans residues 104-116 (DFHNAKNIPNMYS). His106 lines the Fe(3+) pocket. Heme b contacts are provided by residues 113–116 (NMYS) and His118. A helical membrane pass occupies residues 117 to 142 (LHSWIGLTVVILYALQLVLGVSIYLL). Over 143-149 (PFARDTL) the chain is Cytoplasmic. An L-ascorbate-binding site is contributed by Arg150. The helical transmembrane segment at 150–177 (RAALMPVHVYSGLLIFGTVIATALMGIT) threads the bilayer. Positions 157 and 178 each coordinate heme b. Residues 178–195 (EKLIFSLKEPPYSKMPPE) are Extracellular-facing. The chain crosses the membrane as a helical span at residues 196–220 (AIFVNTFGLIILVFGGLVVWMVTTP). At 221 to 283 (AWKRPREQEI…LDDAGQRSTM (63 aa)) the chain is on the cytoplasmic side. Residue Lys223 coordinates heme b. Residues 234–263 (NPTVSSPDGTEEGSTITDCSNTEKSDVELN) form a disordered region. Residues 235–253 (PTVSSPDGTEEGSTITDCS) are compositionally biased toward polar residues. The segment covering 254 to 263 (NTEKSDVELN) has biased composition (basic and acidic residues).

Homodimer. Heme b serves as cofactor.

It localises to the cell membrane. Its subcellular location is the apical cell membrane. The enzyme catalyses Fe(3+)(out) + L-ascorbate(in) = monodehydro-L-ascorbate radical(in) + Fe(2+)(out) + H(+). It carries out the reaction Cu(2+)(out) + L-ascorbate(in) = Cu(+)(out) + monodehydro-L-ascorbate radical(in) + H(+). It catalyses the reaction monodehydro-L-ascorbate radical(out) + L-ascorbate(in) = monodehydro-L-ascorbate radical(in) + L-ascorbate(out). Its function is as follows. Plasma membrane reductase that uses cytoplasmic ascorbate as an electron donor to reduce extracellular Fe(3+) into Fe(2+). It is also able to reduce extracellular monodehydro-L-ascorbate and may be involved in extracellular ascorbate regeneration. May also function as a cupric transmembrane reductase. The chain is Plasma membrane ascorbate-dependent reductase CYBRD1 (cybrd1) from Xenopus tropicalis (Western clawed frog).